A 182-amino-acid chain; its full sequence is Glycoprotein Q2 (182 aa).

The signal sequence occupies residues 1 to 20 (MHFVAVYILTHFHAYPGVAA). Residues Asn74 and Asn110 are each glycosylated (N-linked (GlcNAc...) asparagine; by host).

Interacts with isoform gQ2. The heterodimer gQ1-gQ2 associates with the glycoprotein complex gH-gL to form a tetrameric complex. The gH/gL/gQ1/gQ2 complex binds to host TNFRSF4. In terms of processing, glycosylated by host.

The protein resides in the virion membrane. It is found in the host endoplasmic reticulum-Golgi intermediate compartment. In terms of biological role, plays a role in virus entry by participating in host receptor binding at the cell surface. The sequence is that of Glycoprotein Q2 from Human herpesvirus 6B (strain Z29) (HHV-6 variant B).